Reading from the N-terminus, the 692-residue chain is MAREFSLAKTRNIGIMAHVDAGKTTTTERILYYTGKIHKIGETHEGASQMDWMEQEQERGITITSAATTAQWDGHRVNIIDTPGHVDFTIEVQRSLRVLDGAVTVLDSQSGVEPQTETVWRQATEYGVPRIVFANKMDKIGADFLYSVQTLHDRLQANAHPIQLPIGSEDDFRGIIDLIKMKAEIYTNDLGTDILEEDIPDEYLEQAQEYREKLIEAVAETDEDLMMKYLEGEEITNEELVAGIRKATINVEFFPVLCGSAFKNKGVQLMLDAVIAYLPSPLDIPAIKGVNPDTDAEEERPASDEEPFAALAFKIMTDPFVGRLTFFRVYSGVLNSGSYVMNTSKGKRERIGRILQMHANSRQEIETVYAGDIAAAVGLKDTTTGDSLTDEKAKIILESIEVPEPVIQLMVEPKSKADQDKMGIALQKLAEEDPTFRVETNVETGETVIAGMGELHLDVLVDRMRREFKVEANVGAPQVSYRETFRASTQARGFFKRQSGGKGQFGDVWIEFTPNEEGKGFEFENAIVGGVVPREFIPAVEKGLIESMANGVLAGYPMVDVKAKLYDGSYHDVDSSETAFKIAASLALKEAAKTAQPAILEPMMLVTITAPEDNLGDVMGHVTARRGRVDGMEAHGTSQIVRAYVPLAEMFGYATVLRSATQGRGTFMMVFDHYEDVPKSVQEEIIKKNKGE.

Residues 8–282 (AKTRNIGIMA…AVIAYLPSPL (275 aa)) form the tr-type G domain. GTP contacts are provided by residues 17–24 (AHVDAGKT), 81–85 (DTPGH), and 135–138 (NKMD).

It belongs to the TRAFAC class translation factor GTPase superfamily. Classic translation factor GTPase family. EF-G/EF-2 subfamily.

The protein resides in the cytoplasm. Functionally, catalyzes the GTP-dependent ribosomal translocation step during translation elongation. During this step, the ribosome changes from the pre-translocational (PRE) to the post-translocational (POST) state as the newly formed A-site-bound peptidyl-tRNA and P-site-bound deacylated tRNA move to the P and E sites, respectively. Catalyzes the coordinated movement of the two tRNA molecules, the mRNA and conformational changes in the ribosome. This Streptococcus equi subsp. zooepidemicus (strain MGCS10565) protein is Elongation factor G.